Reading from the N-terminus, the 239-residue chain is Pyridoxine 5'-phosphate synthase (239 aa).

Position 7 (N7) interacts with 3-amino-2-oxopropyl phosphate. Position 9-10 (9-10) interacts with 1-deoxy-D-xylulose 5-phosphate; it reads DH. R18 is a 3-amino-2-oxopropyl phosphate binding site. The active-site Proton acceptor is the H43. R45 and H50 together coordinate 1-deoxy-D-xylulose 5-phosphate. E70 serves as the catalytic Proton acceptor. T100 lines the 1-deoxy-D-xylulose 5-phosphate pocket. H191 serves as the catalytic Proton donor. 3-amino-2-oxopropyl phosphate is bound by residues G192 and 213–214; that span reads GH.

This sequence belongs to the PNP synthase family. Homooctamer; tetramer of dimers.

It is found in the cytoplasm. The catalysed reaction is 3-amino-2-oxopropyl phosphate + 1-deoxy-D-xylulose 5-phosphate = pyridoxine 5'-phosphate + phosphate + 2 H2O + H(+). Its pathway is cofactor biosynthesis; pyridoxine 5'-phosphate biosynthesis; pyridoxine 5'-phosphate from D-erythrose 4-phosphate: step 5/5. Its function is as follows. Catalyzes the complicated ring closure reaction between the two acyclic compounds 1-deoxy-D-xylulose-5-phosphate (DXP) and 3-amino-2-oxopropyl phosphate (1-amino-acetone-3-phosphate or AAP) to form pyridoxine 5'-phosphate (PNP) and inorganic phosphate. The sequence is that of Pyridoxine 5'-phosphate synthase from Trichlorobacter lovleyi (strain ATCC BAA-1151 / DSM 17278 / SZ) (Geobacter lovleyi).